Reading from the N-terminus, the 331-residue chain is NADH-cytochrome b5 reductase 2 (331 aa).

The helical transmembrane segment at 36-56 threads the bilayer; the sequence is VGILIASAVGMAGFGTYFMFG. Residues 80-185 enclose the FAD-binding FR-type domain; it reads KGFVSLQLDD…KGPLPKYEWS (106 aa). An FAD-binding site is contributed by 188-223; that stretch reads KHPHVAMIAGGTGITPMYQIMRAIFKNPADKTKVTL.

It belongs to the flavoprotein pyridine nucleotide cytochrome reductase family. Requires FAD as cofactor.

The protein localises to the mitochondrion outer membrane. The enzyme catalyses 2 Fe(III)-[cytochrome b5] + NADH = 2 Fe(II)-[cytochrome b5] + NAD(+) + H(+). Its function is as follows. May mediate the reduction of outer membrane cytochrome b5. The polypeptide is NADH-cytochrome b5 reductase 2 (MCR1) (Pyricularia oryzae (strain 70-15 / ATCC MYA-4617 / FGSC 8958) (Rice blast fungus)).